The following is a 1434-amino-acid chain: DNA-directed RNA polymerase subunit beta (1434 aa).

The protein belongs to the RNA polymerase beta chain family. The RNAP catalytic core consists of 2 alpha, 1 beta, 1 beta' and 1 omega subunit. When a sigma factor is associated with the core the holoenzyme is formed, which can initiate transcription.

The catalysed reaction is RNA(n) + a ribonucleoside 5'-triphosphate = RNA(n+1) + diphosphate. In terms of biological role, DNA-dependent RNA polymerase catalyzes the transcription of DNA into RNA using the four ribonucleoside triphosphates as substrates. This is DNA-directed RNA polymerase subunit beta from Ureaplasma parvum serovar 3 (strain ATCC 27815 / 27 / NCTC 11736).